A 384-amino-acid chain; its full sequence is F-box only protein 5 (384 aa).

The tract at residues 25–67 (EVKGHKVSPRKTGALSLRSPAATNVSTPLESRSKGPHNKENYQ) is disordered. Residues 45–54 (AATNVSTPLE) are compositionally biased toward polar residues. The span at 55-67 (SRSKGPHNKENYQ) shows a compositional bias: basic and acidic residues. The 48-residue stretch at 187 to 234 (CKLMRKDMRHILARILGLLGDCDLISCTKVSRTWRKIICQDQLALQRW) folds into the F-box domain. A ZBR-type zinc finger spans residues 311–359 (SLRRCSRCSSPARFDAVMQRAVCTRISCAFEFCTLCQSAFHDSTPCRNT). Zn(2+) is bound by residues C315, C318, C333, C338, C343, C346, H351, and C356.

As to quaternary structure, part of a SCF (SKP1-cullin-F-box) protein ligase complex.

The protein localises to the nucleus. The protein resides in the cytoplasm. Its pathway is protein modification; protein ubiquitination. Its function is as follows. During embryonic development, regulates the integrity of the genome and therefore the cell cycle progression by preventing rereplication through an APC-Cdh1-dependent mechanism. In Danio rerio (Zebrafish), this protein is F-box only protein 5.